The chain runs to 97 residues: NADH-ubiquinone oxidoreductase chain 4L (97 aa).

3 helical membrane-spanning segments follow: residues 1-21, 28-48, and 57-77; these read MSMF…YVFC, LVVL…IVLF, and FFPV…LSIL.

Belongs to the complex I subunit 4L family.

It is found in the mitochondrion membrane. It catalyses the reaction a ubiquinone + NADH + 5 H(+)(in) = a ubiquinol + NAD(+) + 4 H(+)(out). In terms of biological role, core subunit of the mitochondrial membrane respiratory chain NADH dehydrogenase (Complex I) that is believed to belong to the minimal assembly required for catalysis. Complex I functions in the transfer of electrons from NADH to the respiratory chain. The immediate electron acceptor for the enzyme is believed to be ubiquinone. In Locusta migratoria (Migratory locust), this protein is NADH-ubiquinone oxidoreductase chain 4L (ND4L).